Consider the following 538-residue polypeptide: uncharacterized protein (538 aa).

Disordered regions lie at residues 20–71 (RLSA…GGAQ), 151–211 (LWAE…EHPK), 288–331 (MLQP…QQHK), and 458–482 (EFEKASKLTGPGEASSGVGHSLKNY). Over residues 154 to 171 (ESEKSESKGTRRDFRSYD) the composition is skewed to basic and acidic residues.

This is an uncharacterized protein from Homo sapiens (Human).